A 502-amino-acid chain; its full sequence is Lysine--tRNA ligase (502 aa).

Mg(2+)-binding residues include glutamate 403 and glutamate 410.

This sequence belongs to the class-II aminoacyl-tRNA synthetase family. In terms of assembly, homodimer. Mg(2+) serves as cofactor.

It localises to the cytoplasm. The enzyme catalyses tRNA(Lys) + L-lysine + ATP = L-lysyl-tRNA(Lys) + AMP + diphosphate. The polypeptide is Lysine--tRNA ligase (Synechococcus sp. (strain CC9605)).